Consider the following 325-residue polypeptide: Lipoyl synthase (325 aa).

A disordered region spans residues 1 to 31; that stretch reads MANLIDNTARSAASDARAARHPEKQKRADTP. Basic and acidic residues predominate over residues 17–31; it reads RAARHPEKQKRADTP. 7 residues coordinate [4Fe-4S] cluster: cysteine 65, cysteine 70, cysteine 76, cysteine 91, cysteine 95, cysteine 98, and serine 304. The Radical SAM core domain occupies 77–293; sequence WEQKHATFMI…ETIARAKGFL (217 aa).

It belongs to the radical SAM superfamily. Lipoyl synthase family. It depends on [4Fe-4S] cluster as a cofactor.

It localises to the cytoplasm. The enzyme catalyses [[Fe-S] cluster scaffold protein carrying a second [4Fe-4S](2+) cluster] + N(6)-octanoyl-L-lysyl-[protein] + 2 oxidized [2Fe-2S]-[ferredoxin] + 2 S-adenosyl-L-methionine + 4 H(+) = [[Fe-S] cluster scaffold protein] + N(6)-[(R)-dihydrolipoyl]-L-lysyl-[protein] + 4 Fe(3+) + 2 hydrogen sulfide + 2 5'-deoxyadenosine + 2 L-methionine + 2 reduced [2Fe-2S]-[ferredoxin]. The protein operates within protein modification; protein lipoylation via endogenous pathway; protein N(6)-(lipoyl)lysine from octanoyl-[acyl-carrier-protein]: step 2/2. Catalyzes the radical-mediated insertion of two sulfur atoms into the C-6 and C-8 positions of the octanoyl moiety bound to the lipoyl domains of lipoate-dependent enzymes, thereby converting the octanoylated domains into lipoylated derivatives. The polypeptide is Lipoyl synthase (Maricaulis maris (strain MCS10) (Caulobacter maris)).